A 333-amino-acid chain; its full sequence is Ornithine carbamoyltransferase (333 aa).

Residues 56 to 59 (STRT), glutamine 83, arginine 107, and 134 to 137 (HPTQ) contribute to the carbamoyl phosphate site. L-ornithine contacts are provided by residues asparagine 167, aspartate 231, and 235–236 (SM). Carbamoyl phosphate-binding positions include 273 to 274 (CL) and arginine 318.

This sequence belongs to the aspartate/ornithine carbamoyltransferase superfamily. OTCase family.

It is found in the cytoplasm. It carries out the reaction carbamoyl phosphate + L-ornithine = L-citrulline + phosphate + H(+). It functions in the pathway amino-acid biosynthesis; L-arginine biosynthesis; L-arginine from L-ornithine and carbamoyl phosphate: step 1/3. Its function is as follows. Reversibly catalyzes the transfer of the carbamoyl group from carbamoyl phosphate (CP) to the N(epsilon) atom of ornithine (ORN) to produce L-citrulline. In Staphylococcus aureus (strain Mu50 / ATCC 700699), this protein is Ornithine carbamoyltransferase (argF).